The following is a 239-amino-acid chain: Probable transcriptional regulatory protein ABO_1803 (239 aa).

It belongs to the TACO1 family.

It localises to the cytoplasm. The polypeptide is Probable transcriptional regulatory protein ABO_1803 (Alcanivorax borkumensis (strain ATCC 700651 / DSM 11573 / NCIMB 13689 / SK2)).